Consider the following 58-residue polypeptide: Large ribosomal subunit protein uL30 (58 aa).

This sequence belongs to the universal ribosomal protein uL30 family. Part of the 50S ribosomal subunit.

The polypeptide is Large ribosomal subunit protein uL30 (Trichlorobacter lovleyi (strain ATCC BAA-1151 / DSM 17278 / SZ) (Geobacter lovleyi)).